The primary structure comprises 317 residues: Transaldolase (317 aa).

The active-site Schiff-base intermediate with substrate is the Lys126.

The protein belongs to the transaldolase family. Type 1 subfamily. In terms of assembly, homodimer.

The protein localises to the cytoplasm. It catalyses the reaction D-sedoheptulose 7-phosphate + D-glyceraldehyde 3-phosphate = D-erythrose 4-phosphate + beta-D-fructose 6-phosphate. Its pathway is carbohydrate degradation; pentose phosphate pathway; D-glyceraldehyde 3-phosphate and beta-D-fructose 6-phosphate from D-ribose 5-phosphate and D-xylulose 5-phosphate (non-oxidative stage): step 2/3. Functionally, transaldolase is important for the balance of metabolites in the pentose-phosphate pathway. The sequence is that of Transaldolase from Paraburkholderia phytofirmans (strain DSM 17436 / LMG 22146 / PsJN) (Burkholderia phytofirmans).